Reading from the N-terminus, the 218-residue chain is Probable nicotinate-nucleotide adenylyltransferase (218 aa).

This sequence belongs to the NadD family.

It carries out the reaction nicotinate beta-D-ribonucleotide + ATP + H(+) = deamido-NAD(+) + diphosphate. The protein operates within cofactor biosynthesis; NAD(+) biosynthesis; deamido-NAD(+) from nicotinate D-ribonucleotide: step 1/1. Functionally, catalyzes the reversible adenylation of nicotinate mononucleotide (NaMN) to nicotinic acid adenine dinucleotide (NaAD). The protein is Probable nicotinate-nucleotide adenylyltransferase of Acidithiobacillus ferrooxidans (strain ATCC 23270 / DSM 14882 / CIP 104768 / NCIMB 8455) (Ferrobacillus ferrooxidans (strain ATCC 23270)).